A 239-amino-acid chain; its full sequence is DNA repair protein RecO (239 aa).

This sequence belongs to the RecO family.

Involved in DNA repair and RecF pathway recombination. This chain is DNA repair protein RecO, found in Bifidobacterium longum (strain DJO10A).